We begin with the raw amino-acid sequence, 255 residues long: Pimeloyl-[acyl-carrier protein] methyl ester esterase (255 aa).

The region spanning 16-241 (LVLLHGWGLN…AAHAPFISHP (226 aa)) is the AB hydrolase-1 domain. Residues Trp-22, 81–82 (SL), and 142–146 (FLALQ) contribute to the substrate site. Ser-81 serves as the catalytic Nucleophile. Catalysis depends on residues Asp-206 and His-234. Substrate is bound at residue His-234.

It belongs to the AB hydrolase superfamily. Carboxylesterase BioH family. Monomer.

Its subcellular location is the cytoplasm. It carries out the reaction 6-carboxyhexanoyl-[ACP] methyl ester + H2O = 6-carboxyhexanoyl-[ACP] + methanol + H(+). It participates in cofactor biosynthesis; biotin biosynthesis. The physiological role of BioH is to remove the methyl group introduced by BioC when the pimeloyl moiety is complete. It allows to synthesize pimeloyl-ACP via the fatty acid synthetic pathway through the hydrolysis of the ester bonds of pimeloyl-ACP esters. Also displays a weak thioesterase activity. Can form a complex with CoA, and may be involved in the condensation of CoA and pimelic acid into pimeloyl-CoA, a precursor in biotin biosynthesis. The chain is Pimeloyl-[acyl-carrier protein] methyl ester esterase from Serratia marcescens.